Here is a 126-residue protein sequence, read N- to C-terminus: MSQFAILGFIALGGAFGACSRYLVSELCVVLLGRGFPYGTLTVNVVGSFIMGLLIAAFESELLATEPWRQIIGLGFLGALTTFSTFSMDNVLLMQQGAFFKMGLNVVLNVTLSITAAWVGFQLLKS.

Helical transmembrane passes span 4-24 (FAIL…RYLV), 38-58 (YGTL…IAAF), 71-91 (IIGL…MDNV), and 104-124 (LNVV…FQLL). Residues Gly-78 and Thr-81 each contribute to the Na(+) site.

It belongs to the fluoride channel Fluc/FEX (TC 1.A.43) family.

It localises to the cell inner membrane. It catalyses the reaction fluoride(in) = fluoride(out). With respect to regulation, na(+) is not transported, but it plays an essential structural role and its presence is essential for fluoride channel function. Functionally, fluoride-specific ion channel. Important for reducing fluoride concentration in the cell, thus reducing its toxicity. This is Fluoride-specific ion channel FluC from Vibrio vulnificus (strain CMCP6).